Reading from the N-terminus, the 596-residue chain is Alpha-1,3-galactosidase A (596 aa).

The first 21 residues, 1-21 (MQNPVASLLFILAMLTGPCPA), serve as a signal peptide directing secretion. Residues 23–57 (DYPERTERTQSAGNHVWHIDPDKGNDGNPGTAPST) are disordered. PbH1 repeat units follow at residues 351–373 (RGKI…NVHG), 482–504 (RKPV…LVED), 515–537 (VRNM…QIVP), and 547–569 (HRNI…RIRH).

It belongs to the glycosyl hydrolase 110 family. A subfamily.

The enzyme catalyses Hydrolysis of terminal, non-reducing branched (1-&gt;3)-alpha-D-galactosidic residues, producing free D-galactose.. It carries out the reaction Hydrolysis of terminal, non-reducing alpha-D-galactose residues in alpha-D-galactosides, including galactose oligosaccharides, galactomannans and galactolipids.. In terms of biological role, alpha-galactosidase that specifically removes branched alpha-1,3-linked galactose residues present in blood group B antigens. Has no activity toward linear alpha-1,3-linked galactose residues. In Akkermansia muciniphila (strain ATCC BAA-835 / DSM 22959 / JCM 33894 / BCRC 81048 / CCUG 64013 / CIP 107961 / Muc), this protein is Alpha-1,3-galactosidase A (glaA).